Here is a 59-residue protein sequence, read N- to C-terminus: Large ribosomal subunit protein uL30 (59 aa).

Belongs to the universal ribosomal protein uL30 family. In terms of assembly, part of the 50S ribosomal subunit.

The chain is Large ribosomal subunit protein uL30 from Clostridium botulinum (strain ATCC 19397 / Type A).